Here is a 267-residue protein sequence, read N- to C-terminus: 4-hydroxy-tetrahydrodipicolinate reductase (267 aa).

NAD(+) contacts are provided by residues 10-15 and glutamate 36; that span reads GCGGRM. Residue arginine 37 participates in NADP(+) binding. NAD(+)-binding positions include 99–101 and 123–126; these read GTT and APNF. The Proton donor/acceptor role is filled by histidine 156. Histidine 157 lines the (S)-2,3,4,5-tetrahydrodipicolinate pocket. Catalysis depends on lysine 160, which acts as the Proton donor. 166 to 167 serves as a coordination point for (S)-2,3,4,5-tetrahydrodipicolinate; it reads GT.

Belongs to the DapB family.

The protein resides in the cytoplasm. The enzyme catalyses (S)-2,3,4,5-tetrahydrodipicolinate + NAD(+) + H2O = (2S,4S)-4-hydroxy-2,3,4,5-tetrahydrodipicolinate + NADH + H(+). It carries out the reaction (S)-2,3,4,5-tetrahydrodipicolinate + NADP(+) + H2O = (2S,4S)-4-hydroxy-2,3,4,5-tetrahydrodipicolinate + NADPH + H(+). The protein operates within amino-acid biosynthesis; L-lysine biosynthesis via DAP pathway; (S)-tetrahydrodipicolinate from L-aspartate: step 4/4. Catalyzes the conversion of 4-hydroxy-tetrahydrodipicolinate (HTPA) to tetrahydrodipicolinate. The protein is 4-hydroxy-tetrahydrodipicolinate reductase of Laribacter hongkongensis (strain HLHK9).